Reading from the N-terminus, the 116-residue chain is Nucleoid-associated protein P9215_00191 (116 aa).

The protein belongs to the YbaB/EbfC family. As to quaternary structure, homodimer.

Its subcellular location is the cytoplasm. It localises to the nucleoid. In terms of biological role, binds to DNA and alters its conformation. May be involved in regulation of gene expression, nucleoid organization and DNA protection. The chain is Nucleoid-associated protein P9215_00191 from Prochlorococcus marinus (strain MIT 9215).